Reading from the N-terminus, the 121-residue chain is Large ribosomal subunit protein uL18 (121 aa).

This sequence belongs to the universal ribosomal protein uL18 family. As to quaternary structure, part of the 50S ribosomal subunit; part of the 5S rRNA/L5/L18/L25 subcomplex. Contacts the 5S and 23S rRNAs.

Functionally, this is one of the proteins that bind and probably mediate the attachment of the 5S RNA into the large ribosomal subunit, where it forms part of the central protuberance. This chain is Large ribosomal subunit protein uL18, found in Paraburkholderia phymatum (strain DSM 17167 / CIP 108236 / LMG 21445 / STM815) (Burkholderia phymatum).